Reading from the N-terminus, the 160-residue chain is MTKEVTVESFELDHIAVKAPYVRLISEEFGPKGDLITNFDIRLVQPNEDSIPTAGLHTIEHLLAKLIRQRIDGMIDCSPFGCRTGFHLIMWGKHTTTQIATVIKASLEEIANTISWKDVPGTTIESCGNYKDHSLFSAKEWAKLILKQGISDDPFERHLV.

Residues His-57, His-61, and Cys-127 each coordinate Fe cation.

Belongs to the LuxS family. Homodimer. The cofactor is Fe cation.

The catalysed reaction is S-(5-deoxy-D-ribos-5-yl)-L-homocysteine = (S)-4,5-dihydroxypentane-2,3-dione + L-homocysteine. Functionally, involved in the synthesis of autoinducer 2 (AI-2) which is secreted by bacteria and is used to communicate both the cell density and the metabolic potential of the environment. The regulation of gene expression in response to changes in cell density is called quorum sensing. Catalyzes the transformation of S-ribosylhomocysteine (RHC) to homocysteine (HC) and 4,5-dihydroxy-2,3-pentadione (DPD). This chain is S-ribosylhomocysteine lyase, found in Streptococcus mutans serotype c (strain ATCC 700610 / UA159).